Here is a 151-residue protein sequence, read N- to C-terminus: Small ribosomal subunit protein uS15 (151 aa).

This sequence belongs to the universal ribosomal protein uS15 family.

In Spodoptera frugiperda (Fall armyworm), this protein is Small ribosomal subunit protein uS15 (RpS13).